We begin with the raw amino-acid sequence, 511 residues long: S-layer protein B (511 aa).

Residues 1–24 (MVKYMNLIVLGMLMFGVFVTLSLG) form the signal peptide. Positions 358 to 392 (IQRLQSEVSVLESEVDQLKVEIQSLNETLTLQASE) form a coiled coil. A helical transmembrane segment spans residues 487–507 (GGIILGVIALIIAIVAVVLVF).

The protein belongs to the Sulfolobales SlaB family. The mushroom-shaped unit cells of the Sulfolobales' S-layers may consist of three SlaB subunits and six SlaA subunits.

It is found in the secreted. The protein resides in the cell wall. The protein localises to the S-layer. It localises to the cell membrane. In terms of biological role, S-layer small protein. May anchor the complex to the cell membrane. The polypeptide is S-layer protein B (Acidianus ambivalens (Desulfurolobus ambivalens)).